Reading from the N-terminus, the 653-residue chain is Beta-galactosidase (653 aa).

A signal peptide spans 1 to 22 (MPGVVRLLALLLVPLLLGSARG). The propeptide occupies 23–27 (LHNAT). The N-linked (GlcNAc...) asparagine glycan is linked to Asn-25. Tyr-82 contacts substrate. An N-linked (GlcNAc...) asparagine glycan is attached at Asn-96. Substrate is bound by residues Glu-128 and Asn-186. The active-site Proton donor is Glu-187. An intrachain disulfide couples Cys-194 to Cys-229. N-linked (GlcNAc...) asparagine glycosylation occurs at Asn-246. Glu-267 functions as the Nucleophile in the catalytic mechanism. Tyr-332 lines the substrate pocket. Asn-463, Asn-497, and Asn-554 each carry an N-linked (GlcNAc...) asparagine glycan. A disulfide bridge connects residues Cys-625 and Cys-633.

It belongs to the glycosyl hydrolase 35 family. Homodimer. May form higher multimers.

It is found in the lysosome. It carries out the reaction Hydrolysis of terminal non-reducing beta-D-galactose residues in beta-D-galactosides.. Its function is as follows. Cleaves beta-linked terminal galactosyl residues from gangliosides, glycoproteins, and glycosaminoglycans. This is Beta-galactosidase (GLB1) from Bos taurus (Bovine).